A 363-amino-acid chain; its full sequence is dTDP-3-amino-3,6-dideoxy-alpha-D-galactopyranose transaminase (363 aa).

An N6-(pyridoxal phosphate)lysine modification is found at Lys185.

It belongs to the DegT/DnrJ/EryC1 family. The cofactor is pyridoxal 5'-phosphate.

It carries out the reaction dTDP-3-amino-3,6-dideoxy-alpha-D-galactopyranose + 2-oxoglutarate = dTDP-3-dehydro-6-deoxy-alpha-D-galactose + L-glutamate. Functionally, specifically aminates dTDP-6-deoxy-D-xylohex-3-ulose to form dTDP-D-Fucp3N in the biosynthesis of dTDP-3-acetamido-3,6-dideoxy-alpha-D-galactose, a glycan chain of the S-layer. The protein is dTDP-3-amino-3,6-dideoxy-alpha-D-galactopyranose transaminase (fdtB) of Aneurinibacillus thermoaerophilus.